A 205-amino-acid polypeptide reads, in one-letter code: Glycerol-3-phosphate acyltransferase (205 aa).

The next 5 helical transmembrane spans lie at S6–V26, K55–V75, V89–V109, I120–A140, and A162–I182.

It belongs to the PlsY family. As to quaternary structure, probably interacts with PlsX.

It is found in the cell inner membrane. The catalysed reaction is an acyl phosphate + sn-glycerol 3-phosphate = a 1-acyl-sn-glycero-3-phosphate + phosphate. It participates in lipid metabolism; phospholipid metabolism. In terms of biological role, catalyzes the transfer of an acyl group from acyl-phosphate (acyl-PO(4)) to glycerol-3-phosphate (G3P) to form lysophosphatidic acid (LPA). This enzyme utilizes acyl-phosphate as fatty acyl donor, but not acyl-CoA or acyl-ACP. This chain is Glycerol-3-phosphate acyltransferase, found in Herminiimonas arsenicoxydans.